We begin with the raw amino-acid sequence, 212 residues long: uncharacterized protein (212 aa).

Residues G53, E74, and D97 each contribute to the S-adenosyl-L-methionine site.

Belongs to the methyltransferase superfamily. YrrT family.

Could be a S-adenosyl-L-methionine-dependent methyltransferase. This is an uncharacterized protein from Bacillus mycoides (strain KBAB4) (Bacillus weihenstephanensis).